Consider the following 257-residue polypeptide: uncharacterized protein (257 aa).

An N-terminal signal peptide occupies residues 1 to 22; that stretch reads MGYLKRFALYISVMILIFAIAG. The N-palmitoyl cysteine moiety is linked to residue Cys23. Cys23 is lipidated: S-diacylglycerol cysteine.

It belongs to the staphylococcal tandem lipoprotein family.

The protein localises to the cell membrane. This is an uncharacterized protein from Staphylococcus aureus (strain USA300).